A 512-amino-acid polypeptide reads, in one-letter code: 2,3-bisphosphoglycerate-independent phosphoglycerate mutase (512 aa).

Mn(2+) is bound by residues aspartate 11 and serine 61. Serine 61 acts as the Phosphoserine intermediate in catalysis. Substrate contacts are provided by residues histidine 122, 152 to 153 (RD), arginine 184, arginine 190, 259 to 262 (RADR), and lysine 332. Positions 399, 403, 440, 441, and 459 each coordinate Mn(2+).

It belongs to the BPG-independent phosphoglycerate mutase family. In terms of assembly, monomer. The cofactor is Mn(2+).

The catalysed reaction is (2R)-2-phosphoglycerate = (2R)-3-phosphoglycerate. It functions in the pathway carbohydrate degradation; glycolysis; pyruvate from D-glyceraldehyde 3-phosphate: step 3/5. In terms of biological role, catalyzes the interconversion of 2-phosphoglycerate and 3-phosphoglycerate. The polypeptide is 2,3-bisphosphoglycerate-independent phosphoglycerate mutase (Francisella tularensis subsp. tularensis (strain FSC 198)).